Here is a 195-residue protein sequence, read N- to C-terminus: Cysteine/O-acetylserine efflux protein (195 aa).

Over 1–9 (MTPILLSAF) the chain is Periplasmic. The helical transmembrane segment at 10-32 (WTYTLITAMTPGPNNILALSSAT) threads the bilayer. Residues 33 to 46 (SHGFRQSTRVLAGM) are Cytoplasmic-facing. The helical transmembrane segment at 47-67 (SLGFLIVMLLCAGISFSLAVI) threads the bilayer. The Periplasmic segment spans residues 68–69 (DP). The helical transmembrane segment at 70–90 (AAVHLLSWAGAAYIVWLAWKI) threads the bilayer. Over 91-104 (ATSPTKEDGLQAKP) the chain is Cytoplasmic. Residues 105 to 125 (ISFWASFALQFVNVKIILYGV) form a helical membrane-spanning segment. Residues 126–141 (TALSTFVLPQTQALSW) are Periplasmic-facing. A helical transmembrane segment spans residues 142–162 (VVGVSVLLAMIGTFGNVCWAL). Residues 163–176 (AGHLFQRLFRQYGR) are Cytoplasmic-facing. Residues 177–194 (QLNIVLALLLVYCAVRIF) traverse the membrane as a helical segment. Position 195 (Y195) is a topological domain, periplasmic.

It belongs to the Rht family.

It localises to the cell inner membrane. The catalysed reaction is O-acetyl-L-serine(in) = O-acetyl-L-serine(out). It carries out the reaction L-cysteine(in) = L-cysteine(out). Functionally, exporter of O-acetylserine (OAS) and cysteine. This chain is Cysteine/O-acetylserine efflux protein (eamB), found in Shigella flexneri serotype 5b (strain 8401).